The following is a 402-amino-acid chain: Sulfate adenylyltransferase (402 aa).

The protein belongs to the sulfate adenylyltransferase family.

The enzyme catalyses sulfate + ATP + H(+) = adenosine 5'-phosphosulfate + diphosphate. It participates in sulfur metabolism; hydrogen sulfide biosynthesis; sulfite from sulfate: step 1/3. The sequence is that of Sulfate adenylyltransferase from Ruthia magnifica subsp. Calyptogena magnifica.